We begin with the raw amino-acid sequence, 62 residues long: Protein CYSTEINE-RICH TRANSMEMBRANE MODULE 2 (62 aa).

2 helical membrane-spanning segments follow: residues 23–39 and 33–53; these read VAVA…AAFD and VVAA…LSLI.

Belongs to the CYSTM1 family. As to quaternary structure, heterodimers. Binds weakly to CYSTM7 and WIH1/CYSTM13. Mostly expressed in stems, siliques, leaves and flowers and, to a lower extent, in roots.

Its subcellular location is the cell membrane. It is found in the nucleus. The protein resides in the secreted. It localises to the cell wall. Functionally, involved in resistance to abiotic stress. In terms of biological role, confers resistance to heavy metal ions (e.g. cadmium (CdCl(2)) and copper (CuCl(2))) by chelating them at the plasma membrane of root cells, thus stopping their entry and reducing their accumulation. In Arabidopsis thaliana (Mouse-ear cress), this protein is Protein CYSTEINE-RICH TRANSMEMBRANE MODULE 2.